Consider the following 156-residue polypeptide: Ribosomal RNA large subunit methyltransferase H (156 aa).

S-adenosyl-L-methionine-binding positions include leucine 73, glycine 104, and 123-128 (VSSLTL).

The protein belongs to the RNA methyltransferase RlmH family. In terms of assembly, homodimer.

Its subcellular location is the cytoplasm. It carries out the reaction pseudouridine(1915) in 23S rRNA + S-adenosyl-L-methionine = N(3)-methylpseudouridine(1915) in 23S rRNA + S-adenosyl-L-homocysteine + H(+). Functionally, specifically methylates the pseudouridine at position 1915 (m3Psi1915) in 23S rRNA. The chain is Ribosomal RNA large subunit methyltransferase H from Burkholderia thailandensis (strain ATCC 700388 / DSM 13276 / CCUG 48851 / CIP 106301 / E264).